Consider the following 352-residue polypeptide: Protein-glutamate methylesterase/protein-glutamine glutaminase (352 aa).

Positions 5–123 (RILIVDDSVI…SKEKAIEYIR (119 aa)) constitute a Response regulatory domain. Asp56 carries the 4-aspartylphosphate modification. The 187-residue stretch at 166–352 (EIVAIGVSTG…LAEEIIRRIG (187 aa)) folds into the CheB-type methylesterase domain. Catalysis depends on residues Ser173, His200, and Asp296.

Belongs to the CheB family. Phosphorylated by CheA. Phosphorylation of the N-terminal regulatory domain activates the methylesterase activity.

The protein localises to the cytoplasm. It catalyses the reaction [protein]-L-glutamate 5-O-methyl ester + H2O = L-glutamyl-[protein] + methanol + H(+). The catalysed reaction is L-glutaminyl-[protein] + H2O = L-glutamyl-[protein] + NH4(+). Functionally, involved in chemotaxis. Part of a chemotaxis signal transduction system that modulates chemotaxis in response to various stimuli. Catalyzes the demethylation of specific methylglutamate residues introduced into the chemoreceptors (methyl-accepting chemotaxis proteins or MCP) by CheR. Also mediates the irreversible deamidation of specific glutamine residues to glutamic acid. In Trichodesmium erythraeum (strain IMS101), this protein is Protein-glutamate methylesterase/protein-glutamine glutaminase.